Consider the following 53-residue polypeptide: IgW transmembrane form Tm1T3/Tm6T3/Tm3C4 (53 aa).

A disordered region spans residues 1–25 (VQAVPPDVKGEEGKEEVEDMDGDDN). Acidic residues predominate over residues 13–24 (GKEEVEDMDGDD). A helical transmembrane segment spans residues 29 to 49 (VAAFAILFILSFLYSTFVTVV).

In terms of tissue distribution, expressed in the spleen, pancreas, peripheral blood lymphocytes and at low levels in the epigonal organ.

The protein localises to the membrane. The protein is IgW transmembrane form Tm1T3/Tm6T3/Tm3C4 of Ginglymostoma cirratum (Nurse shark).